Consider the following 317-residue polypeptide: Transaldolase (317 aa).

Catalysis depends on K132, which acts as the Schiff-base intermediate with substrate.

This sequence belongs to the transaldolase family. Type 1 subfamily. In terms of assembly, homodimer.

It localises to the cytoplasm. It carries out the reaction D-sedoheptulose 7-phosphate + D-glyceraldehyde 3-phosphate = D-erythrose 4-phosphate + beta-D-fructose 6-phosphate. It functions in the pathway carbohydrate degradation; pentose phosphate pathway; D-glyceraldehyde 3-phosphate and beta-D-fructose 6-phosphate from D-ribose 5-phosphate and D-xylulose 5-phosphate (non-oxidative stage): step 2/3. In terms of biological role, transaldolase is important for the balance of metabolites in the pentose-phosphate pathway. The polypeptide is Transaldolase (Photorhabdus laumondii subsp. laumondii (strain DSM 15139 / CIP 105565 / TT01) (Photorhabdus luminescens subsp. laumondii)).